A 120-amino-acid chain; its full sequence is Non-specific lipid-transfer protein (120 aa).

Positions 1–26 are cleaved as a signal peptide; sequence MGVLRSSFVAMMVMYMVLATTPNAEA. Disulfide bonds link C30–C79, C40–C56, C57–C102, and C77–C116.

This sequence belongs to the plant LTP family. As to expression, expressed in protoderm cells of somatic and zygotic embryos, and transiently expressed in epidermal cell layers of leaves, flowers and seeds.

In terms of biological role, plant non-specific lipid-transfer proteins transfer phospholipids as well as galactolipids across membranes. May play a role in wax or cutin deposition in the cell walls of expanding epidermal cells and certain secretory tissues. This is Non-specific lipid-transfer protein (EP2) from Daucus carota (Wild carrot).